A 205-amino-acid polypeptide reads, in one-letter code: Polyamine-modulated factor 1 (205 aa).

The interval 1-28 is disordered; the sequence is MAEASSVNVGSGCAEKGPEELSQEPARP. Residues 140-190 are a coiled coil; that stretch reads YLLQQRDALQRRVQRQEAENRQLADAVLAGRRQLEELQLQAQARQQAWQAL.

In terms of assembly, component of the MIS12 complex composed of MIS12, DSN1, NSL1 and PMF1. Interacts with COPS7A. Interacts via its coiled-coil domain with the leucine-zipper domain of NFE2L2. The interaction with NFE2L2 is required for the transcriptional regulation of SSAT.

It is found in the nucleus. Its subcellular location is the chromosome. The protein resides in the centromere. It localises to the kinetochore. Part of the MIS12 complex which is required for normal chromosome alignment and segregation and kinetochore formation during mitosis. May act as a cotranscription partner of NFE2L2 involved in regulation of polyamine-induced transcription of SSAT. This is Polyamine-modulated factor 1 (PMF1) from Bos taurus (Bovine).